A 567-amino-acid polypeptide reads, in one-letter code: Urease subunit alpha (567 aa).

Positions 134, 136, and 217 each coordinate Ni(2+). An N6-carboxylysine modification is found at K217. H219 provides a ligand contact to substrate. The Ni(2+) site is built by H246 and H272. H320 acts as the Proton donor in catalysis. D360 provides a ligand contact to Ni(2+).

The protein belongs to the metallo-dependent hydrolases superfamily. Urease alpha subunit family. In terms of assembly, heterotrimer of UreA (gamma), UreB (beta) and UreC (alpha) subunits. Three heterotrimers associate to form the active enzyme. The cofactor is Ni cation. Post-translationally, carboxylation allows a single lysine to coordinate two nickel ions.

It localises to the cytoplasm. It catalyses the reaction urea + 2 H2O + H(+) = hydrogencarbonate + 2 NH4(+). It participates in nitrogen metabolism; urea degradation; CO(2) and NH(3) from urea (urease route): step 1/1. The polypeptide is Urease subunit alpha (Pseudomonas putida (strain GB-1)).